We begin with the raw amino-acid sequence, 1256 residues long: Putative protein DDB_G0292252 (1256 aa).

Disordered stretches follow at residues Met1–Asn53, Leu145–Arg243, Glu898–Thr951, and Ser1069–Ser1136. Low complexity predominate over residues Asn147–Gly214. The span at Gln222 to Arg243 shows a compositional bias: polar residues. Composition is skewed to low complexity over residues Glu898 to Glu916 and Thr925 to Thr942. The span at Ser1069–Pro1079 shows a compositional bias: polar residues. Residues Ser1080–Ser1136 are compositionally biased toward low complexity.

This is Putative protein DDB_G0292252 from Dictyostelium discoideum (Social amoeba).